Reading from the N-terminus, the 485-residue chain is WAS/WASL-interacting protein family member 3 (485 aa).

Pro residues predominate over residues Met-1–Pro-30. Positions Met-1–Arg-485 are disordered. 3 consecutive short sequence motifs (profilin-binding motif) follow at residues Val-3–Pro-8, Leu-11–Pro-16, and Ala-20–Pro-25. Positions Gly-45–Val-62 constitute a WH2 domain. Arg-46 carries the asymmetric dimethylarginine modification. An RLRK motif is present at residues Arg-58–Lys-61. Polar residues predominate over residues Thr-63–Gly-78. Phosphoserine is present on Ser-150. Pro residues-rich tracts occupy residues Pro-165–Ser-200 and Val-207–Pro-243. Ser-208 is subject to Phosphoserine. A compositionally biased stretch (low complexity) spans Ala-244–Leu-259. 2 stretches are compositionally biased toward pro residues: residues His-260–Gly-275 and Pro-293–Pro-312. Ser-394 is modified (phosphoserine). The span at Thr-396–Gly-407 shows a compositional bias: polar residues. Positions Val-417–Pro-441 are enriched in basic and acidic residues. Residues Thr-426–Val-450 carry the WASP-binding motif motif. A compositionally biased stretch (polar residues) spans Arg-475–Arg-485.

The protein belongs to the verprolin family. In terms of assembly, isoform 1 interacts with WASL (via WH1 domain), and monomeric and filamentous actin. In terms of tissue distribution, detected mainly in brain and at lower levels in heart and lung (at protein level). Also detected in testis but not in kidney, liver or spleen.

The protein resides in the cytoplasm. May have a role in spermatogenesis. May be a regulator of cytoskeletal organization. This Rattus norvegicus (Rat) protein is WAS/WASL-interacting protein family member 3 (Wipf3).